An 85-amino-acid chain; its full sequence is UPF0297 protein CD630_12830 (85 aa).

It belongs to the UPF0297 family.

The sequence is that of UPF0297 protein CD630_12830 from Clostridioides difficile (strain 630) (Peptoclostridium difficile).